Consider the following 374-residue polypeptide: NAD-capped RNA hydrolase ndx-9 (374 aa).

Residues Cys-181, Cys-184, Cys-199, and Cys-202 each contribute to the Zn(2+) site. Substrate is bound by residues Tyr-207, 243 to 245 (AGF), Glu-259, Glu-263, and Glu-307. Positions 208–336 (PTFSPVSITL…LADPLLKNLP (129 aa)) constitute a Nudix hydrolase domain. Residues Ala-243, Glu-259, Glu-263, and Glu-307 each contribute to the Mg(2+) site. The Nudix box motif lies at 244-265 (GFAHSGESMAECARREIAEEVG). A Microbody targeting signal motif is present at residues 367-369 (LEN).

This sequence belongs to the Nudix hydrolase family. NudC subfamily. In terms of assembly, homodimer. It depends on Mg(2+) as a cofactor. Mn(2+) serves as cofactor. Zn(2+) is required as a cofactor.

It carries out the reaction a 5'-end NAD(+)-phospho-ribonucleoside in mRNA + H2O = a 5'-end phospho-adenosine-phospho-ribonucleoside in mRNA + beta-nicotinamide D-ribonucleotide + 2 H(+). It catalyses the reaction NAD(+) + H2O = beta-nicotinamide D-ribonucleotide + AMP + 2 H(+). The catalysed reaction is NADH + H2O = reduced beta-nicotinamide D-ribonucleotide + AMP + 2 H(+). In terms of biological role, mRNA decapping enzyme that specifically removes the nicotinamide adenine dinucleotide (NAD) cap from a subset of mRNAs by hydrolyzing the diphosphate linkage to produce nicotinamide mononucleotide (NMN) and 5' monophosphate mRNA. The NAD-cap is present at the 5'-end of some RNAs; in contrast to the canonical N7 methylguanosine (m7G) cap, the NAD cap promotes mRNA decay. Mediates the hydrolysis of some nucleoside diphosphate derivatives. The sequence is that of NAD-capped RNA hydrolase ndx-9 (ndx-9) from Caenorhabditis elegans.